Consider the following 88-residue polypeptide: UPF0297 protein Cphy_2298 (88 aa).

The protein belongs to the UPF0297 family.

The protein is UPF0297 protein Cphy_2298 of Lachnoclostridium phytofermentans (strain ATCC 700394 / DSM 18823 / ISDg) (Clostridium phytofermentans).